Consider the following 1018-residue polypeptide: Transmembrane protein 132A (1018 aa).

Positions 1 to 32 (MTERKAAAPRGPYGAWFCLLVALALEVVRVSS) are cleaved as a signal peptide. Topologically, residues 33–846 (NHDTLDPIYL…VTDLELGMYA (814 aa)) are extracellular. Asn276 carries an N-linked (GlcNAc...) asparagine glycan. Residues 606-911 (IEVRSPLSDA…QLDRCSSSGP (306 aa)) are binds to HSPA5/GRP78. Positions 666–1018 (LPAPKQEVAL…NYMERIRGSS (353 aa)) are confers cellular localization similar to full-length form. Over residues 807–818 (ERAEEEAGKEEN) the composition is skewed to basic and acidic residues. Positions 807–833 (ERAEEEAGKEENEAKEEEEDEEEMVPA) are disordered. Residues 819–830 (EAKEEEEDEEEM) show a composition bias toward acidic residues. The helical transmembrane segment at 847 to 867 (LLGIFCLAILIFLVNGVVFVL) threads the bilayer. The Cytoplasmic segment spans residues 868–1018 (RYQRKEPPDS…NYMERIRGSS (151 aa)). Residues 900–956 (SRQLDRCSSSGPPKGEGGCPCESGAGGDASTVAPSASESPAGSSSTLARKEAGGRRK) form a disordered region. Composition is skewed to low complexity over residues 906–922 (CSSS…PCES) and 932–944 (APSA…GSSS).

The protein belongs to the TMEM132 family. Interacts with HSPA5/GRP78.

The protein resides in the golgi apparatus membrane. It is found in the endoplasmic reticulum membrane. Functionally, may play a role in embryonic and postnatal development of the brain. Increased resistance to cell death induced by serum starvation in cultured cells. Regulates cAMP-induced GFAP gene expression via STAT3 phosphorylation. The chain is Transmembrane protein 132A (Tmem132a) from Mus musculus (Mouse).